The chain runs to 173 residues: Lipoprotein signal peptidase (173 aa).

3 consecutive transmembrane segments (helical) span residues 12–32 (WLWL…WTIQ), 67–87 (WQRY…VYLL), and 102–122 (ALIL…GYVI). Residues Asp123 and Asp141 contribute to the active site. A helical transmembrane segment spans residues 137-157 (FNIADSAIFTGAVIMIFESFF).

This sequence belongs to the peptidase A8 family.

The protein localises to the cell inner membrane. The enzyme catalyses Release of signal peptides from bacterial membrane prolipoproteins. Hydrolyzes -Xaa-Yaa-Zaa-|-(S,diacylglyceryl)Cys-, in which Xaa is hydrophobic (preferably Leu), and Yaa (Ala or Ser) and Zaa (Gly or Ala) have small, neutral side chains.. It participates in protein modification; lipoprotein biosynthesis (signal peptide cleavage). Its function is as follows. This protein specifically catalyzes the removal of signal peptides from prolipoproteins. The sequence is that of Lipoprotein signal peptidase from Psychromonas ingrahamii (strain DSM 17664 / CCUG 51855 / 37).